Consider the following 187-residue polypeptide: Elongation factor P (187 aa).

This sequence belongs to the elongation factor P family.

Its subcellular location is the cytoplasm. Its pathway is protein biosynthesis; polypeptide chain elongation. In terms of biological role, involved in peptide bond synthesis. Stimulates efficient translation and peptide-bond synthesis on native or reconstituted 70S ribosomes in vitro. Probably functions indirectly by altering the affinity of the ribosome for aminoacyl-tRNA, thus increasing their reactivity as acceptors for peptidyl transferase. The chain is Elongation factor P (efp) from Mycobacterium bovis (strain ATCC BAA-935 / AF2122/97).